Here is a 500-residue protein sequence, read N- to C-terminus: Mucin-like protein 3 (500 aa).

The N-terminal stretch at 1-27 is a signal peptide; that stretch reads MAQPTSGLYSTFGFFICLLFFPASWEA. At 28-429 the chain is on the extracellular side; the sequence is GANTFQELQK…GENNSFPVWA (402 aa). 2 disordered regions span residues 55–198 and 275–324; these read THRA…SQKP and EGKT…PTAS. Residues 58 to 71 are compositionally biased toward basic and acidic residues; the sequence is ASSDQKTSRQHPPD. Residues 76 to 89 show a composition bias toward polar residues; it reads TATQKAKNQCNTTR. Asn108 carries an N-linked (GlcNAc...) asparagine glycan. Composition is skewed to basic and acidic residues over residues 111 to 123 and 132 to 142; these read VRHEMPPASEKDL and ARNERSADDPR. N-linked (GlcNAc...) asparagine glycosylation is present at Asn148. 3 stretches are compositionally biased toward polar residues: residues 159–178, 279–289, and 298–324; these read PRRNTSCMPSTRRTSLTTKS, SPASESSSQAQ, and TSASENTIPVSAKSTPSTEKATKPTAS. The helical transmembrane segment at 430-450 threads the bilayer; the sequence is IVIVILMAVIILLVFIGLILL. The Cytoplasmic portion of the chain corresponds to 451–500; sequence VSCASRARHVLTQNSEEPEPQPEDKGSRNSYPVYLMEQQNLNLNQIPSPP.

Its subcellular location is the cell membrane. It localises to the cytoplasm. Functionally, may modulate NF-kappaB signaling and play a role in cell growth. This chain is Mucin-like protein 3, found in Mus musculus (Mouse).